The following is an 86-amino-acid chain: Small ribosomal subunit protein bS18 (86 aa).

It belongs to the bacterial ribosomal protein bS18 family. In terms of assembly, part of the 30S ribosomal subunit. Forms a tight heterodimer with protein bS6.

Functionally, binds as a heterodimer with protein bS6 to the central domain of the 16S rRNA, where it helps stabilize the platform of the 30S subunit. The sequence is that of Small ribosomal subunit protein bS18 from Campylobacter curvus (strain 525.92).